The sequence spans 150 residues: Putative pre-16S rRNA nuclease (150 aa).

It belongs to the YqgF nuclease family.

It is found in the cytoplasm. In terms of biological role, could be a nuclease involved in processing of the 5'-end of pre-16S rRNA. The protein is Putative pre-16S rRNA nuclease of Chlamydia abortus (strain DSM 27085 / S26/3) (Chlamydophila abortus).